A 161-amino-acid polypeptide reads, in one-letter code: Large ribosomal subunit protein uL30m (161 aa).

A mitochondrion-targeting transit peptide spans 1–34 (MAGILRSIVQRPPGRLQTATKGVEPLVCVDWIRH).

Belongs to the universal ribosomal protein uL30 family. As to quaternary structure, component of the mitochondrial ribosome large subunit (39S) which comprises a 16S rRNA and about 50 distinct proteins.

It is found in the mitochondrion. The sequence is that of Large ribosomal subunit protein uL30m (MRPL30) from Bos taurus (Bovine).